The sequence spans 480 residues: MFS-type transporter oryF (480 aa).

The span at 1–10 (MAEEVNERTR) shows a compositional bias: basic and acidic residues. The tract at residues 1-24 (MAEEVNERTRLLSQSDDPSPSLEE) is disordered. A compositionally biased stretch (low complexity) spans 11 to 22 (LLSQSDDPSPSL). The next 12 membrane-spanning stretches (helical) occupy residues 41–61 (LCIA…AIIV), 81–101 (AFVS…GPLS), 107–127 (ISLL…CAFA), 138–158 (FITG…IGDL), 170–190 (LYTL…AYIV), 197–217 (AIFA…LCTL), 264–284 (FLGT…LFGL), 308–328 (ALNY…TGSL), 351–371 (ILML…GWSA), 378–398 (IMPN…YQCI), 415–435 (GALT…APLI), and 443–463 (WGSS…PILL).

Belongs to the major facilitator superfamily.

It is found in the membrane. MFS-type transporter; part of the gene cluster that mediates the biosynthesis of oryzines, natural products with an unusual maleidride backbone. The protein is MFS-type transporter oryF of Aspergillus oryzae (strain ATCC 42149 / RIB 40) (Yellow koji mold).